Consider the following 561-residue polypeptide: Arginine--tRNA ligase (561 aa).

A 'HIGH' region motif is present at residues 129-139 (ANPTGPLHVGH).

This sequence belongs to the class-I aminoacyl-tRNA synthetase family. In terms of assembly, monomer.

The protein resides in the cytoplasm. It catalyses the reaction tRNA(Arg) + L-arginine + ATP = L-arginyl-tRNA(Arg) + AMP + diphosphate. This Bordetella avium (strain 197N) protein is Arginine--tRNA ligase.